Reading from the N-terminus, the 271-residue chain is MVLIKEFRVVLPCSVQEYQVGQLYSVAEASKNETGGGEGIEVLKNEPYENDGEKGQYTHKIYHLKSKVPAFVRMIAPEGSLVFHEKAWNAYPYCRTIVTNEYMKDDFFIKIETWHKPDLGTLENVHGLDPNTWKTVEIVHIDIADRSQVEPADYKADEDPALFHSVKTKRGPLGPNWKKELANTPDCPRMCAYKLVTIKFKWWGLQSKVENFIQKQEKRIFTNLHRQLFCWIDKWIDLTMEDIRRMEDETQKELETMRKKGSVRGTSAADA.

Lys-215 is modified (N6-acetyllysine). The residue at position 262 (Ser-262) is a Phosphoserine; by PKC.

It belongs to the PtdIns transfer protein family. PI transfer class I subfamily. Post-translationally, constitutive phosphorylation of Ser-262 has no effect on phospholipid transfer activity but is required for Golgi targeting.

Its subcellular location is the golgi apparatus. It is found in the golgi apparatus membrane. It localises to the endoplasmic reticulum membrane. It carries out the reaction a 1,2-diacyl-sn-glycero-3-phosphocholine(in) = a 1,2-diacyl-sn-glycero-3-phosphocholine(out). The enzyme catalyses a 1,2-diacyl-sn-glycero-3-phospho-(1D-myo-inositol)(in) = a 1,2-diacyl-sn-glycero-3-phospho-(1D-myo-inositol)(out). The catalysed reaction is an N-(acyl)-sphingosylphosphocholine(in) = an N-(acyl)-sphingosylphosphocholine(out). Functionally, catalyzes the transfer of phosphatidylinositol, phosphatidylcholine and sphingomyelin between membranes. Required for COPI-mediated retrograde transport from the Golgi to the endoplasmic reticulum; phosphatidylinositol and phosphatidylcholine transfer activity is essential for this function. The polypeptide is Phosphatidylinositol transfer protein beta isoform (Pitpnb) (Mus musculus (Mouse)).